We begin with the raw amino-acid sequence, 831 residues long: Periplasmic nitrate reductase (831 aa).

A signal peptide (tat-type signal) is located at residues 1–29 (MTLSRRDFIKQTAVAATASVAGVTLPAGA). The 4Fe-4S Mo/W bis-MGD-type domain maps to 41 to 97 (LKWSKAPCRFCGTGCGVTVAVRDNKVVATNGDPQAEVNKGLNCVKGYFLSKIMYGQD). C48, C51, C55, and C83 together coordinate [4Fe-4S] cluster. Residues K85, Q152, N177, C181, 214–221 (WGSNMAEM), 245–249 (STFTH), 264–266 (QTD), M375, Q379, N485, 511–512 (SD), K534, D561, and 721–730 (TGRVLEHWHS) each bind Mo-bis(molybdopterin guanine dinucleotide). W797 provides a ligand contact to substrate. The Mo-bis(molybdopterin guanine dinucleotide) site is built by N805 and K822.

It belongs to the prokaryotic molybdopterin-containing oxidoreductase family. NasA/NapA/NarB subfamily. In terms of assembly, component of the periplasmic nitrate reductase NapAB complex composed of NapA and NapB. The cofactor is [4Fe-4S] cluster. It depends on Mo-bis(molybdopterin guanine dinucleotide) as a cofactor. In terms of processing, predicted to be exported by the Tat system. The position of the signal peptide cleavage has not been experimentally proven.

It localises to the periplasm. It carries out the reaction 2 Fe(II)-[cytochrome] + nitrate + 2 H(+) = 2 Fe(III)-[cytochrome] + nitrite + H2O. In terms of biological role, catalytic subunit of the periplasmic nitrate reductase complex NapAB. Receives electrons from NapB and catalyzes the reduction of nitrate to nitrite. In Cupriavidus taiwanensis (strain DSM 17343 / BCRC 17206 / CCUG 44338 / CIP 107171 / LMG 19424 / R1) (Ralstonia taiwanensis (strain LMG 19424)), this protein is Periplasmic nitrate reductase.